A 125-amino-acid polypeptide reads, in one-letter code: Large ribosomal subunit protein eL31 (125 aa).

Residue Met-1 is modified to N-acetylmethionine. Ser-15 is subject to Phosphoserine. Residues Lys-55 and Lys-70 each carry the N6-succinyllysine modification. N6-acetyllysine; alternate is present on Lys-75. Lys-75 bears the N6-succinyllysine; alternate mark. Ser-98 carries the phosphoserine modification.

Belongs to the eukaryotic ribosomal protein eL31 family. In terms of assembly, component of the large ribosomal subunit.

It localises to the cytoplasm. In terms of biological role, component of the large ribosomal subunit. The ribosome is a large ribonucleoprotein complex responsible for the synthesis of proteins in the cell. This chain is Large ribosomal subunit protein eL31 (RPL31), found in Oryctolagus cuniculus (Rabbit).